The sequence spans 157 residues: Small ribosomal subunit protein uS7 (157 aa).

The protein belongs to the universal ribosomal protein uS7 family. Part of the 30S ribosomal subunit. Contacts proteins S9 and S11.

One of the primary rRNA binding proteins, it binds directly to 16S rRNA where it nucleates assembly of the head domain of the 30S subunit. Is located at the subunit interface close to the decoding center, probably blocks exit of the E-site tRNA. The chain is Small ribosomal subunit protein uS7 from Blochmanniella floridana.